The chain runs to 156 residues: Small ribosomal subunit protein uS7 (156 aa).

Belongs to the universal ribosomal protein uS7 family. As to quaternary structure, part of the 30S ribosomal subunit. Contacts proteins S9 and S11.

One of the primary rRNA binding proteins, it binds directly to 16S rRNA where it nucleates assembly of the head domain of the 30S subunit. Is located at the subunit interface close to the decoding center, probably blocks exit of the E-site tRNA. The sequence is that of Small ribosomal subunit protein uS7 (rspG) from Streptomyces coelicolor (strain ATCC BAA-471 / A3(2) / M145).